A 718-amino-acid polypeptide reads, in one-letter code: Kelch-like protein 4 (718 aa).

The tract at residues 46 to 69 is disordered; that stretch reads TPVQGRLKSHSRDRNGLKKSNSPV. The 68-residue stretch at 182–249 folds into the BTB domain; it reads CDVLLIAGHL…AYTGVLQLKE (68 aa). 6 Kelch repeats span residues 430–476, 477–523, 525–570, 571–617, 619–670, and 671–717; these read ALYA…VIDN, KLYV…TLEG, MYAV…ALNN, KLYA…TYNG, LYVV…PLGD, and KLYV…VVKL.

As to expression, expressed in adult fibroblasts and in a range of fetal tissues including tongue, palate, and mandible.

It localises to the cytoplasm. The protein localises to the cytoskeleton. The polypeptide is Kelch-like protein 4 (KLHL4) (Homo sapiens (Human)).